Consider the following 143-residue polypeptide: Large ribosomal subunit protein bL28c (143 aa).

The transit peptide at 1 to 66 directs the protein to the chloroplast; that stretch reads MTTMATQGAW…SFPGIQPIVA (66 aa).

Belongs to the bacterial ribosomal protein bL28 family. Part of the 50S ribosomal subunit.

The protein resides in the plastid. It is found in the chloroplast. In Arabidopsis thaliana (Mouse-ear cress), this protein is Large ribosomal subunit protein bL28c (RPL28).